The chain runs to 1669 residues: Collagen alpha-1(IV) chain (1669 aa).

The first 27 residues, 1–27, serve as a signal peptide directing secretion; the sequence is MGPRLSVWLLLLFAALLLHEERSRAAA. Positions 28–172 are cleaved as a propeptide — N-terminal propeptide (7S domain); that stretch reads KGDCGGSGCG…LGHVPGTLLK (145 aa). The tract at residues 47-1443 is disordered; the sequence is QKGERGLPGL…MGPPGTPSVD (1397 aa). A compositionally biased stretch (low complexity) spans 92–104; it reads TRGPPGAAGYPGN. N-linked (GlcNAc...) asparagine glycosylation is present at N126. The segment at 173–1440 is triple-helical region; the sequence is GERGFPGIPG…PGSMGPPGTP (1268 aa). Positions 196-214 are enriched in pro residues; it reads VGPPGFTGPPGPPGPPGPP. Residues P204, P207, and P210 each carry the 3-hydroxyproline modification. The segment covering 234–247 has biased composition (low complexity); it reads QGVSGPPGVPGQAQ. Basic and acidic residues predominate over residues 289-298; sequence PGKDGEKGER. Residues 367–376 show a composition bias toward pro residues; that stretch reads PGQPGPPGFP. Positions 377–387 are enriched in low complexity; it reads TPGQAGAPGFP. Composition is skewed to pro residues over residues 413 to 424 and 436 to 448; these read PGPPGPPGPPGQ and PGPP…PGTP. Residues 485–494 are compositionally biased toward low complexity; it reads PGEIGFPGQP. 2 stretches are compositionally biased toward basic and acidic residues: residues 497 to 508 and 535 to 545; these read KGDRGLPGRDGL and FDMRLKGDKGD. The span at 586-595 shows a compositional bias: gly residues; that stretch reads GPPGGVGFPG. P587 and P602 each carry 3-hydroxyproline. P603 is modified (4-hydroxyproline). P605 is subject to 3-hydroxyproline. P606 carries the 4-hydroxyproline modification. The span at 611–620 shows a compositional bias: low complexity; that stretch reads IGPVGEKGQA. The span at 621–630 shows a compositional bias: gly residues; it reads GFPGGPGSPG. P623, P626, P629, and P632 each carry 4-hydroxyproline. P647 carries the 3-hydroxyproline modification. Positions 715 to 731 are enriched in low complexity; it reads RPGFNGLPGNPGPQGQK. Residues 758–767 are compositionally biased toward gly residues; that stretch reads GSIGGPGVPG. A compositionally biased stretch (pro residues) spans 784 to 802; sequence PGPPGVQGPAGPPGVPGIG. The span at 803–817 shows a compositional bias: gly residues; it reads PPGAMGPPGGQGPPG. 2 stretches are compositionally biased toward low complexity: residues 847-875 and 994-1003; these read SQGL…PGFP and DPGLSGTPGS. Residues 1011–1020 show a composition bias toward gly residues; sequence GSVGGMGLPG. P1214 carries the post-translational modification 3-hydroxyproline. The span at 1220–1230 shows a compositional bias: low complexity; the sequence is QPGLPGTPGHP. Residues 1247 to 1258 are compositionally biased toward pro residues; sequence PGHPGPMGPPGF. Residues 1290–1299 are compositionally biased toward gly residues; the sequence is GMPGIGGSPG. 3 stretches are compositionally biased toward low complexity: residues 1333–1343, 1368–1391, and 1398–1412; these read DQGVPGPKGLQ, PGLK…SVGL, and PGFD…ETGP. Residues 1413-1428 show a composition bias toward pro residues; that stretch reads FGPPGPRGFPGPPGPD. P1424 carries the post-translational modification 3-hydroxyproline. Positions 1445–1669 constitute a Collagen IV NC1 domain; it reads GFLVTRHSQT…SRCQVCMRRT (225 aa). Disulfide bonds link C1460–C1551, C1493–C1548, C1505–C1511, C1570–C1665, C1604–C1662, and C1616–C1622. M1533 participates in a covalent cross-link: S-Lysyl-methionine sulfilimine (Met-Lys) (interchain with K-1651). K1651 participates in a covalent cross-link: S-Lysyl-methionine sulfilimine (Lys-Met) (interchain with M-1533).

The protein belongs to the type IV collagen family. In terms of assembly, there are six type IV collagen isoforms, alpha 1(IV)-alpha 6(IV), each of which can form a triple helix structure with 2 other chains to generate type IV collagen network. Interacts with EFEMP2. Lysines at the third position of the tripeptide repeating unit (G-X-Y) are hydroxylated. The modified lysines can be O-glycosylated. Post-translationally, contains 4-hydroxyproline. Prolines at the third position of the tripeptide repeating unit (G-X-Y) are hydroxylated in some or all of the chains. In terms of processing, contains 3-hydroxyproline. This modification occurs on the first proline residue in the sequence motif Gly-Pro-Hyp, where Hyp is 4-hydroxyproline. Type IV collagens contain numerous cysteine residues which are involved in inter- and intramolecular disulfide bonding. 12 of these, located in the NC1 domain, are conserved in all known type IV collagens. Post-translationally, the trimeric structure of the NC1 domains is stabilized by covalent bonds (sulfilimine cross-links) between Lys and Met residues. These cross-links are important for the mechanical stability of the basement membrane. Sulfilimine cross-link is catalyzed by PXDN. In terms of processing, proteolytic processing produces the C-terminal NC1 peptide, arresten. As to expression, detected in the basement membrane of the cornea (at protein level).

The protein resides in the secreted. It is found in the extracellular space. The protein localises to the extracellular matrix. It localises to the basement membrane. Type IV collagen is the major structural component of glomerular basement membranes (GBM), forming a 'chicken-wire' meshwork together with laminins, proteoglycans and entactin/nidogen. In terms of biological role, arresten, comprising the C-terminal NC1 domain, inhibits angiogenesis and tumor formation. The C-terminal half is found to possess the anti-angiogenic activity. Specifically inhibits endothelial cell proliferation, migration and tube formation. The chain is Collagen alpha-1(IV) chain from Mus musculus (Mouse).